A 675-amino-acid chain; its full sequence is PTS system glucose-specific EIICBA component (675 aa).

A PTS EIIC type-1 domain is found at 3 to 414 (KKFFGQLQRI…FNFKTPGRED (412 aa)). The next 11 helical transmembrane spans lie at 16–36 (LMLP…GNAF), 63–83 (AGGI…AIGL), 89–109 (VAAI…GMFL), 126–146 (VLGI…GALA), 170–190 (FVPI…AIIW), 199–219 (AFSE…FGFI), 273–293 (FMQG…LAIY), 303–323 (VVAG…ITEP), 329–349 (LFVA…SFLI), 355–375 (LHLG…GILP), and 383–403 (VIPV…FLIV). A PTS EIIB type-1 domain is found at 425–506 (SELPFKVLDA…QQIMDGKITS (82 aa)). The active-site Phosphocysteine intermediate; for EIIB activity is cysteine 447. In terms of domain architecture, PTS EIIA type-1 spans 547-651 (DKVFSEKMMG…STITPIVVTN (105 aa)). Histidine 599 (tele-phosphohistidine intermediate; for EIIA activity) is an active-site residue.

It localises to the cell membrane. The enzyme catalyses N(pros)-phospho-L-histidyl-[protein] + D-glucose(out) = D-glucose 6-phosphate(in) + L-histidyl-[protein]. With respect to regulation, inhibited by 2-deoxyglucose and methyl beta-D-glucoside, but not by methyl alpha-D-glucoside, p-nitrophenyl alpha-D-glucoside, o-nitrophenyl beta-D-glucoside and salicin. Functionally, the phosphoenolpyruvate-dependent sugar phosphotransferase system (sugar PTS), a major carbohydrate active transport system, catalyzes the phosphorylation of incoming sugar substrates concomitantly with their translocation across the cell membrane. This system is involved in glucose transport. Cannot transport galactose, fructose, mannose, cellobiose, sucrose, maltose, lactose, melibiose and trehalose, as well as N-acetylglucosamine. This Staphylococcus carnosus (strain TM300) protein is PTS system glucose-specific EIICBA component (ptsG).